We begin with the raw amino-acid sequence, 559 residues long: MRRKIMYNPRKYSSQVVDGFERAPSRAMLYPVGFTKEDFNKPQVGIASTWSMVTPCNMHINKLADETLKGVNATGGKAIIFNTITISDGISMGSEGMKYSLVSREVIADSIETVVGCQGFDGVVAIGGCDKNMPGCIIGLVRLNRPSIFVYGGTIQPGKNHTDVVSVFEAVGQFANHTIDAIELENIEKIAIPGPGSCGGMYTANTMASAIEALGMSLPNSSAQDAISDDKNNDCVQAGQAVLNLLNKDIKPRDIMTMKAFENAITVIIALGGSTNAVLHLIAMASAAEVNLKIDDFTRIGQKVPVIADLKPSGKYMMSELVKIGGTLPLMKMLLDAGLLHGDCLTVTGKTLAENLENVKPYADSQEIIRALDNPIKKDSHLRILRGNLATDGAVAKITGKEGLSFKGNAKCFSREEDALEAILNNQIITGDVIVIRYEGPVGGPGMREMLAPTSAVMGKGLGDKVALITDGRFSGGTHGFVVGHITPEAFEGGVLAVVKDGDEILIDAQNNVLELLVEQAIIDKRLYNWTQPKPNYTKGVLAKFAKLAKSASEGAVTD.

Residue Cys-56 participates in [2Fe-2S] cluster binding. A Mg(2+)-binding site is contributed by Asp-88. Residue Cys-129 coordinates [2Fe-2S] cluster. Mg(2+) contacts are provided by Asp-130 and Lys-131. The residue at position 131 (Lys-131) is an N6-carboxylysine. Residue Cys-198 coordinates [2Fe-2S] cluster. Glu-449 is a binding site for Mg(2+). Ser-475 functions as the Proton acceptor in the catalytic mechanism.

Belongs to the IlvD/Edd family. Homodimer. It depends on [2Fe-2S] cluster as a cofactor. Requires Mg(2+) as cofactor.

It carries out the reaction (2R)-2,3-dihydroxy-3-methylbutanoate = 3-methyl-2-oxobutanoate + H2O. It catalyses the reaction (2R,3R)-2,3-dihydroxy-3-methylpentanoate = (S)-3-methyl-2-oxopentanoate + H2O. The protein operates within amino-acid biosynthesis; L-isoleucine biosynthesis; L-isoleucine from 2-oxobutanoate: step 3/4. It functions in the pathway amino-acid biosynthesis; L-valine biosynthesis; L-valine from pyruvate: step 3/4. Functions in the biosynthesis of branched-chain amino acids. Catalyzes the dehydration of (2R,3R)-2,3-dihydroxy-3-methylpentanoate (2,3-dihydroxy-3-methylvalerate) into 2-oxo-3-methylpentanoate (2-oxo-3-methylvalerate) and of (2R)-2,3-dihydroxy-3-methylbutanoate (2,3-dihydroxyisovalerate) into 2-oxo-3-methylbutanoate (2-oxoisovalerate), the penultimate precursor to L-isoleucine and L-valine, respectively. The chain is Dihydroxy-acid dehydratase from Ruthia magnifica subsp. Calyptogena magnifica.